A 528-amino-acid chain; its full sequence is Lanosterol 14-alpha demethylase (528 aa).

A helical membrane pass occupies residues 15 to 37; sequence LSLSVTQQISILLGVPFVYNLVW. Residue Y64 coordinates oteseconazole. Y118 lines the itraconazole pocket. Posaconazole is bound at residue G307. Oteseconazole is bound at residue H377. Residue C470 participates in heme binding.

The protein belongs to the cytochrome P450 family. Requires heme as cofactor.

The protein localises to the endoplasmic reticulum membrane. The catalysed reaction is a 14alpha-methyl steroid + 3 reduced [NADPH--hemoprotein reductase] + 3 O2 = a Delta(14) steroid + formate + 3 oxidized [NADPH--hemoprotein reductase] + 4 H2O + 4 H(+). The enzyme catalyses a 14alpha-methyl steroid + reduced [NADPH--hemoprotein reductase] + O2 = a 14alpha-hydroxymethyl steroid + oxidized [NADPH--hemoprotein reductase] + H2O + H(+). It carries out the reaction a 14alpha-hydroxymethyl steroid + reduced [NADPH--hemoprotein reductase] + O2 = a 14alpha-formyl steroid + oxidized [NADPH--hemoprotein reductase] + 2 H2O + H(+). It catalyses the reaction a 14alpha-formyl steroid + reduced [NADPH--hemoprotein reductase] + O2 = a Delta(14) steroid + formate + oxidized [NADPH--hemoprotein reductase] + H2O + 2 H(+). The catalysed reaction is lanosterol + 3 reduced [NADPH--hemoprotein reductase] + 3 O2 = 4,4-dimethyl-5alpha-cholesta-8,14,24-trien-3beta-ol + formate + 3 oxidized [NADPH--hemoprotein reductase] + 4 H2O + 4 H(+). The enzyme catalyses lanosterol + reduced [NADPH--hemoprotein reductase] + O2 = 32-hydroxylanosterol + oxidized [NADPH--hemoprotein reductase] + H2O + H(+). It carries out the reaction 32-hydroxylanosterol + reduced [NADPH--hemoprotein reductase] + O2 = 32-oxolanosterol + oxidized [NADPH--hemoprotein reductase] + 2 H2O + H(+). It catalyses the reaction 32-oxolanosterol + reduced [NADPH--hemoprotein reductase] + O2 = 4,4-dimethyl-5alpha-cholesta-8,14,24-trien-3beta-ol + formate + oxidized [NADPH--hemoprotein reductase] + H2O + 2 H(+). The catalysed reaction is eburicol + 3 reduced [NADPH--hemoprotein reductase] + 3 O2 = 14-demethyleburicol + formate + 3 oxidized [NADPH--hemoprotein reductase] + 4 H2O + 4 H(+). The enzyme catalyses eburicol + reduced [NADPH--hemoprotein reductase] + O2 = 32-hydroxyeburicol + oxidized [NADPH--hemoprotein reductase] + H2O + H(+). It carries out the reaction 32-hydroxyeburicol + reduced [NADPH--hemoprotein reductase] + O2 = 32-oxoeburicol + oxidized [NADPH--hemoprotein reductase] + 2 H2O + H(+). It catalyses the reaction 32-oxoeburicol + reduced [NADPH--hemoprotein reductase] + O2 = 14-demethyleburicol + formate + oxidized [NADPH--hemoprotein reductase] + H2O + 2 H(+). It participates in steroid biosynthesis; zymosterol biosynthesis; zymosterol from lanosterol: step 1/6. The catalytic activity is inhibited by the binding of azoles clotrimazole, miconazole, fluconazole, ketoconazole, oteseconazole (VT-1161), tetraconazole, the triazole SCH39304, and the triazole derivative ICI 153066. In terms of biological role, sterol 14alpha-demethylase that plays a critical role in the third module of ergosterol biosynthesis pathway, being ergosterol the major sterol component in fungal membranes that participates in a variety of functions. The third module or late pathway involves the ergosterol synthesis itself through consecutive reactions that mainly occur in the endoplasmic reticulum (ER) membrane. In filamentous fungi, during the initial step of this module, lanosterol (lanosta-8,24-dien-3beta-ol) can be metabolized to eburicol. Sterol 14alpha-demethylase catalyzes the three-step oxidative removal of the 14alpha-methyl group (C-32) of both these sterols in the form of formate, and converts eburicol and lanosterol to 14-demethyleburicol (4,4,24-trimethylergosta-8,14,24(28)-trienol) and 4,4-dimethyl-5alpha-cholesta-8,14,24-trien-3beta-ol, respectively, which are further metabolized by other enzymes in the pathway to ergosterol. Can also use substrates not intrinsic to fungi, such as 24,25-dihydrolanosterol (DHL), producing 4,4-dimethyl-8,14-cholestadien-3-beta-ol, but at lower rates than the endogenous substrates. This Candida albicans (strain SC5314 / ATCC MYA-2876) (Yeast) protein is Lanosterol 14-alpha demethylase.